We begin with the raw amino-acid sequence, 260 residues long: Voltage-dependent calcium channel gamma-6 subunit (260 aa).

Transmembrane regions (helical) follow at residues 43–63 (LLVA…EFWV), 143–163 (VIAV…IMVL), 169–189 (SLLR…FVSL), and 221–241 (LGCG…FLLL).

Belongs to the PMP-22/EMP/MP20 family. CACNG subfamily. As to quaternary structure, interacts with CACNA1C. Identified in a complex with the L-type calcium channel subunits CACNA1C, CACNA2D1 and either CACNB1 or CACNB2. In terms of tissue distribution, detected in brain and heart (at protein level).

The protein resides in the cell membrane. Its function is as follows. Regulates the activity of L-type calcium channels that contain CACNA1C as pore-forming subunit. The protein is Voltage-dependent calcium channel gamma-6 subunit (Cacng6) of Mus musculus (Mouse).